The chain runs to 575 residues: MTYRPLLNDLVDMAAGRAPVDLVVRNARIVDVFSQSIVEAPLAIGGGRFLGFFEAEAHATLDAEGRYLLPGLIDGHVHIESSLVSPAQFARLVLARGTTAVIADPHEIANVCGLAGLRYMLDATRDLPLDVRLALPSCVPATPFENAGAVLDAAALATLMDDPRVAGLGEMMNFPGVLAGDADVLDKIALALDRGKTVDGHSPGLAGRDLATYAAARIATDHECTTVEEMHERIALGMYVLLREGSAARDMARLAPGITPGNARRCVFCTDDRQPADILRDGHIDNHLRIAVSHGVDPVTAVTIATLNAAECFGLRDRGAVAPGRVADFVLVDDLTGFAVRKVYAAGRLVARDGAVVVDLPDHADPAVRDTVNIRPLDDTAFRLPLPTGLARVIGLQPHSLLTDALERDVPRDASGCFTPGDGLVKLAVVERHKATGNVGVGIIEGYGLRGGAVATTVAHDSHNIVVAGDNDADMLVAVRELERTGGGITLCAGGRVLASLPLPVAGLMSDRPATEVSETFAQMLSIAHETLHISRDIEPFMTLSFLTLPVIPALKLTDRGLFDVRTFSFTTVGV.

It belongs to the metallo-dependent hydrolases superfamily. Adenine deaminase family. It depends on Mn(2+) as a cofactor.

It carries out the reaction adenine + H2O + H(+) = hypoxanthine + NH4(+). This Nitratidesulfovibrio vulgaris (strain DP4) (Desulfovibrio vulgaris) protein is Adenine deaminase.